A 251-amino-acid polypeptide reads, in one-letter code: Regulator of G-protein signaling 9-binding protein C (251 aa).

Over 1–230 the chain is Cytoplasmic; that stretch reads MPLQNVKVAD…NSKGCCSDGQ (230 aa). Coiled coils occupy residues 53–94 and 158–187; these read LRDE…ELER and ANKA…MKVN. The chain crosses the membrane as a helical; Anchor for type IV membrane protein span at residues 231–250; the sequence is LIVSLLLCGTALVAITLYSI. Residue L251 is a topological domain, extracellular.

It belongs to the RGS7BP/RGS9BP family.

Its subcellular location is the membrane. In terms of biological role, regulator of G protein-coupled receptor (GPCR) signaling. Probably acts by regulating the activity of some 'R7' family protein (RGS6, RGS7, RGS9 and/or RGS11). The polypeptide is Regulator of G-protein signaling 9-binding protein C (rgs9bp-c) (Xenopus laevis (African clawed frog)).